The sequence spans 151 residues: Deoxyuridine 5'-triphosphate nucleotidohydrolase (151 aa).

Residues 70–72, N83, 87–89, and M97 each bind substrate; these read RSG and LID.

This sequence belongs to the dUTPase family. Mg(2+) serves as cofactor.

The catalysed reaction is dUTP + H2O = dUMP + diphosphate + H(+). The protein operates within pyrimidine metabolism; dUMP biosynthesis; dUMP from dCTP (dUTP route): step 2/2. In terms of biological role, this enzyme is involved in nucleotide metabolism: it produces dUMP, the immediate precursor of thymidine nucleotides and it decreases the intracellular concentration of dUTP so that uracil cannot be incorporated into DNA. The polypeptide is Deoxyuridine 5'-triphosphate nucleotidohydrolase (Ectopseudomonas mendocina (strain ymp) (Pseudomonas mendocina)).